We begin with the raw amino-acid sequence, 347 residues long: Protein RecA (347 aa).

Residue 64–71 (GPESSGKT) participates in ATP binding.

The protein belongs to the RecA family.

The protein localises to the cytoplasm. Its function is as follows. Can catalyze the hydrolysis of ATP in the presence of single-stranded DNA, the ATP-dependent uptake of single-stranded DNA by duplex DNA, and the ATP-dependent hybridization of homologous single-stranded DNAs. It interacts with LexA causing its activation and leading to its autocatalytic cleavage. The polypeptide is Protein RecA (Bacillus velezensis (strain DSM 23117 / BGSC 10A6 / LMG 26770 / FZB42) (Bacillus amyloliquefaciens subsp. plantarum)).